Consider the following 247-residue polypeptide: NAD-dependent protein deacetylase (247 aa).

One can recognise a Deacetylase sirtuin-type domain in the interval 1–247 (MDTRKNLKEL…LGGIVEELGY (247 aa)). NAD(+) is bound by residues Ala23, Thr27, Phe34, Arg35, Gln104, Ile106, Asp107, and His122. Phe34 serves as a coordination point for nicotinamide. Nicotinamide contacts are provided by Ile106 and Asp107. His122 functions as the Proton acceptor in the catalytic mechanism. Residues Cys130, Cys133, Cys152, and Cys155 each contribute to the Zn(2+) site. 4 residues coordinate NAD(+): Thr193, Ser194, Asn216, and Ile234.

It belongs to the sirtuin family. Class U subfamily. It depends on Zn(2+) as a cofactor.

The protein localises to the cytoplasm. The enzyme catalyses N(6)-acetyl-L-lysyl-[protein] + NAD(+) + H2O = 2''-O-acetyl-ADP-D-ribose + nicotinamide + L-lysyl-[protein]. In terms of biological role, NAD-dependent protein deacetylase which modulates the activities of several enzymes which are inactive in their acetylated form. In Clostridium tetani (strain Massachusetts / E88), this protein is NAD-dependent protein deacetylase.